Here is a 217-residue protein sequence, read N- to C-terminus: Protein GrpE (217 aa).

The tract at residues Met-1 to Ser-63 is disordered. A compositionally biased stretch (basic and acidic residues) spans Lys-10–Leu-32. A compositionally biased stretch (low complexity) spans Ser-37–Ser-63.

It belongs to the GrpE family. As to quaternary structure, homodimer.

The protein resides in the cytoplasm. Functionally, participates actively in the response to hyperosmotic and heat shock by preventing the aggregation of stress-denatured proteins, in association with DnaK and GrpE. It is the nucleotide exchange factor for DnaK and may function as a thermosensor. Unfolded proteins bind initially to DnaJ; upon interaction with the DnaJ-bound protein, DnaK hydrolyzes its bound ATP, resulting in the formation of a stable complex. GrpE releases ADP from DnaK; ATP binding to DnaK triggers the release of the substrate protein, thus completing the reaction cycle. Several rounds of ATP-dependent interactions between DnaJ, DnaK and GrpE are required for fully efficient folding. The sequence is that of Protein GrpE from Leptospira borgpetersenii serovar Hardjo-bovis (strain JB197).